We begin with the raw amino-acid sequence, 268 residues long: Inositol polyphosphate multikinase (268 aa).

ATP contacts are provided by residues K27, E86 to I88, and D99. Substrate is bound at residue T127 to I135. D235 contacts ATP.

It belongs to the inositol phosphokinase (IPK) family.

Its subcellular location is the cytoplasm. It is found in the nucleus. It catalyses the reaction 1D-myo-inositol 1,4,5-trisphosphate + 2 ATP = 1D-myo-inositol 1,3,4,5,6-pentakisphosphate + 2 ADP + 2 H(+). It carries out the reaction 1D-myo-inositol 1,4,5-trisphosphate + ATP = 1D-myo-inositol 1,4,5,6-tetrakisphosphate + ADP + H(+). The catalysed reaction is 1D-myo-inositol 1,4,5-trisphosphate + ATP = 1D-myo-inositol 1,3,4,5-tetrakisphosphate + ADP + H(+). The enzyme catalyses 1D-myo-inositol 1,4,5,6-tetrakisphosphate + ATP = 1D-myo-inositol 1,3,4,5,6-pentakisphosphate + ADP + H(+). In terms of biological role, inositol phosphate kinase with both monophosphoinositol and diphosphoinositol polyphosphate synthase activities. Able to phosphorylate inositol 1,4,5-trisphosphate (Ins(1,4,5)P3) on both the carbon-3 and carbon-6 positions to synthesize inositol 1,3,4,5-tetrakisphosphate (Ins(1,3,4,5)P4) and inositol 1,4,5,6-tetrakisphosphate (Ins(1,4,5,6)P4), and then to subsequently phosphorylate and convert either isomer of InsP4 to inositol 1,3,4,5,6-pentakisphosphate (Ins(1,3,4,5,6)P5). Also converts (Ins(1,3,4,5,6)P5) to InsP6. Also has a role in transcription regulation. The catalytic activity is required for PHO gene repression by phosphate and for NCR gene activation in response to nitrogen availability, indicating a role for inositol pyrophosphates in these controls. Inositol polyphosphates may be involved in the regulation of chromatin remodeling of transcription. This Schizosaccharomyces pombe (strain 972 / ATCC 24843) (Fission yeast) protein is Inositol polyphosphate multikinase (arg82).